We begin with the raw amino-acid sequence, 425 residues long: Alpha-(1,3)-fucosyltransferase C (425 aa).

Topologically, residues 1 to 37 (MYLGRVHCSFEVPGLLSGRVGHMSMAVRSVRLACGPR) are cytoplasmic. The chain crosses the membrane as a helical; Signal-anchor for type II membrane protein span at residues 38-58 (GALLLLLLVLLGVLVVLHKVT). Over 59-425 (QSPLLNQNKI…SCRLQSRIRL (367 aa)) the chain is Lumenal. N-linked (GlcNAc...) asparagine glycans are attached at residues Asn-187 and Asn-230.

Belongs to the glycosyltransferase 10 family.

The protein localises to the golgi apparatus. It localises to the golgi stack membrane. Its pathway is protein modification; protein glycosylation. The polypeptide is Alpha-(1,3)-fucosyltransferase C (FucTC) (Drosophila melanogaster (Fruit fly)).